We begin with the raw amino-acid sequence, 132 residues long: Small ribosomal subunit protein uS9 (132 aa).

Positions 103 to 132 (NGLLTRDDRTKERKKPGLKRARKAPQYTKR) are disordered. Residues 114 to 132 (ERKKPGLKRARKAPQYTKR) show a composition bias toward basic residues.

Belongs to the universal ribosomal protein uS9 family.

This Dehalococcoides mccartyi (strain CBDB1) protein is Small ribosomal subunit protein uS9.